The following is a 385-amino-acid chain: S-adenosylmethionine synthase (385 aa).

H16 serves as a coordination point for ATP. Mg(2+) is bound at residue D18. E44 is a K(+) binding site. The L-methionine site is built by E57 and Q100. A flexible loop region spans residues Q100 to R110. Residues D164–K166, K230–F231, D239, R245–K246, A262, and K266 contribute to the ATP site. D239 is a binding site for L-methionine. Residue K270 participates in L-methionine binding.

Belongs to the AdoMet synthase family. In terms of assembly, homotetramer; dimer of dimers. Requires Mg(2+) as cofactor. The cofactor is K(+).

The protein localises to the cytoplasm. It carries out the reaction L-methionine + ATP + H2O = S-adenosyl-L-methionine + phosphate + diphosphate. Its pathway is amino-acid biosynthesis; S-adenosyl-L-methionine biosynthesis; S-adenosyl-L-methionine from L-methionine: step 1/1. In terms of biological role, catalyzes the formation of S-adenosylmethionine (AdoMet) from methionine and ATP. The overall synthetic reaction is composed of two sequential steps, AdoMet formation and the subsequent tripolyphosphate hydrolysis which occurs prior to release of AdoMet from the enzyme. The protein is S-adenosylmethionine synthase of Helicobacter pylori (strain ATCC 700392 / 26695) (Campylobacter pylori).